The following is a 204-amino-acid chain: FMN-dependent NADH:quinone oxidoreductase 5 (204 aa).

FMN is bound at residue serine 10.

Belongs to the azoreductase type 1 family. In terms of assembly, homodimer. Requires FMN as cofactor.

The enzyme catalyses 2 a quinone + NADH + H(+) = 2 a 1,4-benzosemiquinone + NAD(+). The catalysed reaction is N,N-dimethyl-1,4-phenylenediamine + anthranilate + 2 NAD(+) = 2-(4-dimethylaminophenyl)diazenylbenzoate + 2 NADH + 2 H(+). In terms of biological role, quinone reductase that provides resistance to thiol-specific stress caused by electrophilic quinones. Its function is as follows. Also exhibits azoreductase activity. Catalyzes the reductive cleavage of the azo bond in aromatic azo compounds to the corresponding amines. The chain is FMN-dependent NADH:quinone oxidoreductase 5 from Burkholderia lata (strain ATCC 17760 / DSM 23089 / LMG 22485 / NCIMB 9086 / R18194 / 383).